A 194-amino-acid chain; its full sequence is ATP-dependent Clp protease proteolytic subunit (194 aa).

Ser-97 acts as the Nucleophile in catalysis. His-122 is an active-site residue.

This sequence belongs to the peptidase S14 family. As to quaternary structure, fourteen ClpP subunits assemble into 2 heptameric rings which stack back to back to give a disk-like structure with a central cavity, resembling the structure of eukaryotic proteasomes.

The protein localises to the cytoplasm. The catalysed reaction is Hydrolysis of proteins to small peptides in the presence of ATP and magnesium. alpha-casein is the usual test substrate. In the absence of ATP, only oligopeptides shorter than five residues are hydrolyzed (such as succinyl-Leu-Tyr-|-NHMec, and Leu-Tyr-Leu-|-Tyr-Trp, in which cleavage of the -Tyr-|-Leu- and -Tyr-|-Trp bonds also occurs).. In terms of biological role, cleaves peptides in various proteins in a process that requires ATP hydrolysis. Has a chymotrypsin-like activity. Plays a major role in the degradation of misfolded proteins. This Lactobacillus helveticus (strain DPC 4571) protein is ATP-dependent Clp protease proteolytic subunit.